A 166-amino-acid chain; its full sequence is Shikimate kinase (166 aa).

11 to 16 (GSGKST) serves as a coordination point for ATP. Ser15 lines the Mg(2+) pocket. Asp33, Arg57, and Gly79 together coordinate substrate. Arg117 is an ATP binding site. Arg134 lines the substrate pocket.

Belongs to the shikimate kinase family. As to quaternary structure, monomer. The cofactor is Mg(2+).

The protein resides in the cytoplasm. It carries out the reaction shikimate + ATP = 3-phosphoshikimate + ADP + H(+). It participates in metabolic intermediate biosynthesis; chorismate biosynthesis; chorismate from D-erythrose 4-phosphate and phosphoenolpyruvate: step 5/7. In terms of biological role, catalyzes the specific phosphorylation of the 3-hydroxyl group of shikimic acid using ATP as a cosubstrate. The polypeptide is Shikimate kinase (Sulfurihydrogenibium sp. (strain YO3AOP1)).